A 506-amino-acid polypeptide reads, in one-letter code: ATP synthase subunit alpha (506 aa).

169 to 176 lines the ATP pocket; it reads GDRGTGKT.

Belongs to the ATPase alpha/beta chains family. As to quaternary structure, F-type ATPases have 2 components, CF(1) - the catalytic core - and CF(0) - the membrane proton channel. CF(1) has five subunits: alpha(3), beta(3), gamma(1), delta(1), epsilon(1). CF(0) has three main subunits: a(1), b(2) and c(9-12). The alpha and beta chains form an alternating ring which encloses part of the gamma chain. CF(1) is attached to CF(0) by a central stalk formed by the gamma and epsilon chains, while a peripheral stalk is formed by the delta and b chains.

It is found in the cell membrane. The enzyme catalyses ATP + H2O + 4 H(+)(in) = ADP + phosphate + 5 H(+)(out). Its function is as follows. Produces ATP from ADP in the presence of a proton gradient across the membrane. The alpha chain is a regulatory subunit. The protein is ATP synthase subunit alpha of Symbiobacterium thermophilum (strain DSM 24528 / JCM 14929 / IAM 14863 / T).